We begin with the raw amino-acid sequence, 355 residues long: tRNA-specific 2-thiouridylase MnmA (355 aa).

ATP contacts are provided by residues 6–13 (LLSGGVDS) and L33. C100 functions as the Nucleophile in the catalytic mechanism. Residues C100 and C195 are joined by a disulfide bond. G123 serves as a coordination point for ATP. The segment at 145–147 (KDQ) is interaction with tRNA. The Cysteine persulfide intermediate role is filled by C195.

It belongs to the MnmA/TRMU family.

The protein localises to the cytoplasm. It carries out the reaction S-sulfanyl-L-cysteinyl-[protein] + uridine(34) in tRNA + AH2 + ATP = 2-thiouridine(34) in tRNA + L-cysteinyl-[protein] + A + AMP + diphosphate + H(+). Catalyzes the 2-thiolation of uridine at the wobble position (U34) of tRNA, leading to the formation of s(2)U34. This chain is tRNA-specific 2-thiouridylase MnmA, found in Borrelia garinii subsp. bavariensis (strain ATCC BAA-2496 / DSM 23469 / PBi) (Borreliella bavariensis).